Reading from the N-terminus, the 358-residue chain is Small ribosomal subunit biogenesis GTPase RsgA 2 (358 aa).

The CP-type G domain maps to 106–261; that stretch reads AEQLIAANVD…LIDTPGMREI (156 aa). Residues 151-154 and 203-211 each bind GTP; these read SKAD and GSSGVGKST. Zn(2+)-binding residues include Cys284, Cys289, His291, and Cys297.

It belongs to the TRAFAC class YlqF/YawG GTPase family. RsgA subfamily. In terms of assembly, monomer. Associates with 30S ribosomal subunit, binds 16S rRNA. The cofactor is Zn(2+).

The protein resides in the cytoplasm. Its function is as follows. One of several proteins that assist in the late maturation steps of the functional core of the 30S ribosomal subunit. Helps release RbfA from mature subunits. May play a role in the assembly of ribosomal proteins into the subunit. Circularly permuted GTPase that catalyzes slow GTP hydrolysis, GTPase activity is stimulated by the 30S ribosomal subunit. This is Small ribosomal subunit biogenesis GTPase RsgA 2 from Vibrio parahaemolyticus serotype O3:K6 (strain RIMD 2210633).